The following is a 252-amino-acid chain: 2-succinyl-6-hydroxy-2,4-cyclohexadiene-1-carboxylate synthase (252 aa).

This sequence belongs to the AB hydrolase superfamily. MenH family. As to quaternary structure, monomer.

It carries out the reaction 5-enolpyruvoyl-6-hydroxy-2-succinyl-cyclohex-3-ene-1-carboxylate = (1R,6R)-6-hydroxy-2-succinyl-cyclohexa-2,4-diene-1-carboxylate + pyruvate. It functions in the pathway quinol/quinone metabolism; 1,4-dihydroxy-2-naphthoate biosynthesis; 1,4-dihydroxy-2-naphthoate from chorismate: step 3/7. It participates in quinol/quinone metabolism; menaquinone biosynthesis. Functionally, catalyzes a proton abstraction reaction that results in 2,5-elimination of pyruvate from 2-succinyl-5-enolpyruvyl-6-hydroxy-3-cyclohexene-1-carboxylate (SEPHCHC) and the formation of 2-succinyl-6-hydroxy-2,4-cyclohexadiene-1-carboxylate (SHCHC). The protein is 2-succinyl-6-hydroxy-2,4-cyclohexadiene-1-carboxylate synthase of Escherichia coli O8 (strain IAI1).